A 552-amino-acid chain; its full sequence is CTP synthase (552 aa).

The amidoligase domain stretch occupies residues 1-267 (MSKFVFVTGG…AHQTLELLRM (267 aa)). Ser-13 contributes to the CTP binding site. Ser-13 provides a ligand contact to UTP. Residues 14–19 (SIGKGI) and Asp-71 contribute to the ATP site. Mg(2+) contacts are provided by Asp-71 and Glu-141. Residues 148-150 (DIE), 188-193 (KTKPTQ), and Lys-224 each bind CTP. UTP is bound by residues 188 to 193 (KTKPTQ) and Lys-224. In terms of domain architecture, Glutamine amidotransferase type-1 spans 292–534 (TVALVGKYVQ…INAVLKRRNA (243 aa)). Residue Gly-354 participates in L-glutamine binding. Cys-381 acts as the Nucleophile; for glutamine hydrolysis in catalysis. Residues 382–385 (LGMQ), Glu-405, and Arg-462 contribute to the L-glutamine site. Catalysis depends on residues His-507 and Glu-509.

Belongs to the CTP synthase family. Homotetramer.

The enzyme catalyses UTP + L-glutamine + ATP + H2O = CTP + L-glutamate + ADP + phosphate + 2 H(+). It carries out the reaction L-glutamine + H2O = L-glutamate + NH4(+). The catalysed reaction is UTP + NH4(+) + ATP = CTP + ADP + phosphate + 2 H(+). Its pathway is pyrimidine metabolism; CTP biosynthesis via de novo pathway; CTP from UDP: step 2/2. Its activity is regulated as follows. Allosterically activated by GTP, when glutamine is the substrate; GTP has no effect on the reaction when ammonia is the substrate. The allosteric effector GTP functions by stabilizing the protein conformation that binds the tetrahedral intermediate(s) formed during glutamine hydrolysis. Inhibited by the product CTP, via allosteric rather than competitive inhibition. In terms of biological role, catalyzes the ATP-dependent amination of UTP to CTP with either L-glutamine or ammonia as the source of nitrogen. Regulates intracellular CTP levels through interactions with the four ribonucleotide triphosphates. This Synechocystis sp. (strain ATCC 27184 / PCC 6803 / Kazusa) protein is CTP synthase.